Consider the following 235-residue polypeptide: Putative HAD-hydrolase YfnB (235 aa).

The active-site Nucleophile is Asp-10.

It belongs to the HAD-like hydrolase superfamily. YjjG family.

This Bacillus subtilis (strain 168) protein is Putative HAD-hydrolase YfnB (yfnB).